We begin with the raw amino-acid sequence, 91 residues long: Probable Fe(2+)-trafficking protein (91 aa).

Belongs to the Fe(2+)-trafficking protein family.

Could be a mediator in iron transactions between iron acquisition and iron-requiring processes, such as synthesis and/or repair of Fe-S clusters in biosynthetic enzymes. This chain is Probable Fe(2+)-trafficking protein, found in Polynucleobacter necessarius subsp. necessarius (strain STIR1).